The chain runs to 387 residues: 26S proteasome regulatory subunit 6B homolog (387 aa).

175-182 (GPPGTGKT) contacts ATP.

The protein belongs to the AAA ATPase family. As to quaternary structure, the 26S proteasome consists of a 20S proteasome core and two 19S regulatory subunits. The 20S proteasome core is composed of 28 subunits that are arranged in four stacked rings, resulting in a barrel-shaped structure. The two end rings are each formed by seven alpha subunits, and the two central rings are each formed by seven beta subunits. The catalytic chamber with the active sites is on the inside of the barrel.

It localises to the cytoplasm. The protein localises to the nucleus. In terms of biological role, acts as a regulatory subunit of the 26S proteasome which degrades poly-ubiquitinated proteins in the cytoplasm and in the nucleus. It is essential for the regulated turnover of proteins and for the removal of misfolded proteins. The proteasome is a multicatalytic proteinase complex that is characterized by its ability to cleave peptides with Arg, Phe, Tyr, Leu, and Glu adjacent to the leaving group at neutral or slightly basic pH. This is 26S proteasome regulatory subunit 6B homolog from Encephalitozoon cuniculi (strain GB-M1) (Microsporidian parasite).